The sequence spans 174 residues: Transcription antitermination protein NusB (174 aa).

Residues 1–11 (MSEVETTNDQT) show a composition bias toward polar residues. Residues 1-29 (MSEVETTNDQTPAPKRKDKKPSRSQLRSA) are disordered.

It belongs to the NusB family.

Functionally, involved in transcription antitermination. Required for transcription of ribosomal RNA (rRNA) genes. Binds specifically to the boxA antiterminator sequence of the ribosomal RNA (rrn) operons. The sequence is that of Transcription antitermination protein NusB from Marinomonas sp. (strain MWYL1).